The sequence spans 174 residues: Ribosome maturation factor RimP (174 aa).

It belongs to the RimP family.

The protein resides in the cytoplasm. Required for maturation of 30S ribosomal subunits. This chain is Ribosome maturation factor RimP, found in Acinetobacter baumannii (strain AB307-0294).